The primary structure comprises 593 residues: Kelch-like protein 2 (593 aa).

The tract at residues 1–29 (MESPPLPPACTKQGHQKPLDSKDENPEKH) is disordered. Basic and acidic residues predominate over residues 17 to 29 (KPLDSKDENPEKH). The BTB domain maps to 56-123 (CDVTIVAEDM…VYTAEIQVTE (68 aa)). Kelch repeat units follow at residues 308-353 (LMVV…YMAG), 354-400 (LVFA…VLNG), 402-447 (LYAV…VVGG), 449-496 (LYAV…VLNN), 497-543 (LLYA…AVNG), and 545-591 (LYVV…VIDK).

Component of the BCR(KLHL2) E3 ubiquitin ligase complex, at least composed of CUL3 and KLHL2 and RBX1. Binds actin. Interacts with KLHL12. Interacts (via N-terminus) with FYN (via SH3 domain). Detected in brain neurons, oligodendrocytes and astrocytes (at protein level).

The protein localises to the cytoplasm. The protein resides in the cytoskeleton. It localises to the cell projection. Its subcellular location is the ruffle. It is found in the lamellipodium. The protein localises to the cytosol. The protein operates within protein modification; protein ubiquitination. In terms of biological role, substrate-specific adapter of a BCR (BTB-CUL3-RBX1) E3 ubiquitin ligase complex that mediates the ubiquitination of target proteins, such as NPTXR, WNK1, WNK3 and WNK4, leading most often to their proteasomal degradation. The BCR(KLHL2) complex catalyzes ubiquitination and degradation of NPTXR. Responsible for degradative ubiquitination of the WNK kinases WNK1, WNK3 and WNK4. Plays a role in the reorganization of the actin cytoskeleton. Promotes growth of cell projections in oligodendrocyte precursors. The chain is Kelch-like protein 2 from Rattus norvegicus (Rat).